Here is a 728-residue protein sequence, read N- to C-terminus: 1,4-alpha-glucan branching enzyme GlgB (728 aa).

The Nucleophile role is filled by D405. E458 acts as the Proton donor in catalysis.

This sequence belongs to the glycosyl hydrolase 13 family. GlgB subfamily. In terms of assembly, monomer.

The enzyme catalyses Transfers a segment of a (1-&gt;4)-alpha-D-glucan chain to a primary hydroxy group in a similar glucan chain.. It participates in glycan biosynthesis; glycogen biosynthesis. In terms of biological role, catalyzes the formation of the alpha-1,6-glucosidic linkages in glycogen by scission of a 1,4-alpha-linked oligosaccharide from growing alpha-1,4-glucan chains and the subsequent attachment of the oligosaccharide to the alpha-1,6 position. The sequence is that of 1,4-alpha-glucan branching enzyme GlgB from Citrobacter koseri (strain ATCC BAA-895 / CDC 4225-83 / SGSC4696).